The chain runs to 489 residues: N-succinylglutamate 5-semialdehyde dehydrogenase (489 aa).

223–228 (GSSRTG) serves as a coordination point for NAD(+). Active-site residues include glutamate 246 and cysteine 280.

The protein belongs to the aldehyde dehydrogenase family. AstD subfamily.

It catalyses the reaction N-succinyl-L-glutamate 5-semialdehyde + NAD(+) + H2O = N-succinyl-L-glutamate + NADH + 2 H(+). Its pathway is amino-acid degradation; L-arginine degradation via AST pathway; L-glutamate and succinate from L-arginine: step 4/5. Its function is as follows. Catalyzes the NAD-dependent reduction of succinylglutamate semialdehyde into succinylglutamate. The sequence is that of N-succinylglutamate 5-semialdehyde dehydrogenase from Aeromonas salmonicida (strain A449).